A 303-amino-acid polypeptide reads, in one-letter code: Putative S-adenosyl-L-methionine-dependent methyltransferase MSMEG_1479/MSMEI_1443 (303 aa).

S-adenosyl-L-methionine contacts are provided by residues aspartate 130 and 159–160; that span reads DL.

Belongs to the UPF0677 family.

In terms of biological role, exhibits S-adenosyl-L-methionine-dependent methyltransferase activity. This chain is Putative S-adenosyl-L-methionine-dependent methyltransferase MSMEG_1479/MSMEI_1443, found in Mycolicibacterium smegmatis (strain ATCC 700084 / mc(2)155) (Mycobacterium smegmatis).